The sequence spans 535 residues: MHLKSLLLAALPLLLEASPTIKGEDTASLAINTSSGIFAPYFDRQQPNVASFLDIPYAETPIGNLRFAPPVEKKNAGDDIVHTTKLPAGCIQYLPALLRGTINDGPITAGTFQRGDYANTTEDCLKISLFAPEKSVRAKEGKKTQALPVIVWIHGGGYSVGGTNVPYQLAQNWVQRTQKHIVVQVQYRLNLLGFPNAEGLAREGNNLNLGLLDQRLAVEWVRNNIARFGGDPDRITLWGESAGGYAVDGYLFTWAQDPIIKGVIADSGNALALEGVVGDSRNHTGFSLAAKSMGCGGLLPKDELECMRHVPERNLKEYLQAEVGQGGAADDGLTVSVIADNITVFSNYTERISGNSAKYPANIPVLIGTNTNEGAAVVPYKFPGFETATELPDQLKPLADGFGLNLQCTTLKETRLRAEAGATTYQYLYAGNFTNISPLPWLGAYHTAELPLVFGTYETEGPSTKFERRMSERMQDLYLEFASDPSHGLEKSGWPRAESQPERSKLVKLAADNKVEQVFSAKKLVDECVQNGFAV.

The N-terminal stretch at 1–17 is a signal peptide; that stretch reads MHLKSLLLAALPLLLEA. 2 N-linked (GlcNAc...) asparagine glycosylation sites follow: asparagine 32 and asparagine 119. The active-site Acyl-ester intermediate is serine 241. N-linked (GlcNAc...) asparagine glycosylation is found at asparagine 282, asparagine 341, asparagine 347, and asparagine 432.

Belongs to the type-B carboxylesterase/lipase family.

It localises to the secreted. The catalysed reaction is a carboxylic ester + H2O = an alcohol + a carboxylate + H(+). In terms of biological role, secreted lipase involved in plant virulence. Has a substrate preference for p-nitrophenyl esters with a carbon chain length of C8 (p-nitrophenyl caprylate). This Gibberella zeae (strain ATCC MYA-4620 / CBS 123657 / FGSC 9075 / NRRL 31084 / PH-1) (Wheat head blight fungus) protein is Secreted lipase 5.